The chain runs to 306 residues: uncharacterized protein (306 aa).

Over M1–L6 the chain is Cytoplasmic. Residues L7–I27 form a helical membrane-spanning segment. The 124-residue stretch at I18–S141 folds into the EamA 1 domain. The Periplasmic portion of the chain corresponds to R28–P36. The helical transmembrane segment at L37–L57 threads the bilayer. Residues R58–P67 are Cytoplasmic-facing. Residues L68 to V88 form a helical membrane-spanning segment. Topologically, residues A89–N93 are periplasmic. Residues V94–S114 traverse the membrane as a helical segment. The Cytoplasmic segment spans residues R115–E125. A helical transmembrane segment spans residues W126–S146. Topologically, residues G147–N148 are periplasmic. The chain crosses the membrane as a helical span at residues P149 to G169. The region spanning I160 to L285 is the EamA 2 domain. Residues S170 to T173 lie on the Cytoplasmic side of the membrane. Residues L174–I194 form a helical membrane-spanning segment. Topologically, residues A195–L206 are periplasmic. The chain crosses the membrane as a helical span at residues P207–I227. Over N228 to P239 the chain is Cytoplasmic. Residues A240–L260 traverse the membrane as a helical segment. Residues G261–E269 are Periplasmic-facing. The chain crosses the membrane as a helical span at residues W270–F290. Residues P291–E306 are Cytoplasmic-facing.

It belongs to the EamA transporter family.

It is found in the cell inner membrane. This is an uncharacterized protein from Escherichia coli O157:H7.